The sequence spans 358 residues: Phosphoserine aminotransferase (358 aa).

R41 is an L-glutamate binding site. Residues 75–76, W100, T148, D167, and Q190 each bind pyridoxal 5'-phosphate; that span reads AS. N6-(pyridoxal phosphate)lysine is present on K191. Residue 233–234 coordinates pyridoxal 5'-phosphate; sequence NT.

The protein belongs to the class-V pyridoxal-phosphate-dependent aminotransferase family. SerC subfamily. As to quaternary structure, homodimer. The cofactor is pyridoxal 5'-phosphate.

The protein resides in the cytoplasm. The catalysed reaction is O-phospho-L-serine + 2-oxoglutarate = 3-phosphooxypyruvate + L-glutamate. It carries out the reaction 4-(phosphooxy)-L-threonine + 2-oxoglutarate = (R)-3-hydroxy-2-oxo-4-phosphooxybutanoate + L-glutamate. The protein operates within amino-acid biosynthesis; L-serine biosynthesis; L-serine from 3-phospho-D-glycerate: step 2/3. Its pathway is cofactor biosynthesis; pyridoxine 5'-phosphate biosynthesis; pyridoxine 5'-phosphate from D-erythrose 4-phosphate: step 3/5. Catalyzes the reversible conversion of 3-phosphohydroxypyruvate to phosphoserine and of 3-hydroxy-2-oxo-4-phosphonooxybutanoate to phosphohydroxythreonine. The chain is Phosphoserine aminotransferase from Campylobacter jejuni subsp. doylei (strain ATCC BAA-1458 / RM4099 / 269.97).